The sequence spans 363 residues: Phosphoserine aminotransferase (363 aa).

Residue Arg-41 participates in L-glutamate binding. Residues 75 to 76 (AS), Trp-100, Thr-155, Asp-175, and Gln-198 contribute to the pyridoxal 5'-phosphate site. At Lys-199 the chain carries N6-(pyridoxal phosphate)lysine. Pyridoxal 5'-phosphate is bound at residue 239–240 (NT).

It belongs to the class-V pyridoxal-phosphate-dependent aminotransferase family. SerC subfamily. In terms of assembly, homodimer. It depends on pyridoxal 5'-phosphate as a cofactor.

It is found in the cytoplasm. The catalysed reaction is O-phospho-L-serine + 2-oxoglutarate = 3-phosphooxypyruvate + L-glutamate. It catalyses the reaction 4-(phosphooxy)-L-threonine + 2-oxoglutarate = (R)-3-hydroxy-2-oxo-4-phosphooxybutanoate + L-glutamate. It functions in the pathway amino-acid biosynthesis; L-serine biosynthesis; L-serine from 3-phospho-D-glycerate: step 2/3. Functionally, catalyzes the reversible conversion of 3-phosphohydroxypyruvate to phosphoserine and of 3-hydroxy-2-oxo-4-phosphonooxybutanoate to phosphohydroxythreonine. The chain is Phosphoserine aminotransferase from Streptococcus suis (strain 98HAH33).